We begin with the raw amino-acid sequence, 788 residues long: Integrin beta-3 (788 aa).

The first 26 residues, 1-26 (MRARPRPRPLWATVLALGALAGVGVG), serve as a signal peptide directing secretion. At 27 to 718 (GPNICTTRGV…EEPECPKGPD (692 aa)) the chain is on the extracellular side. In terms of domain architecture, PSI spans 30-76 (ICTTRGVSSCQQCLAVSPMCAWCSDEALPLGSPRCDLKENLLKDNCA). 19 disulfide bridges follow: C31–C49, C39–C461, C42–C64, C52–C75, C203–C210, C258–C299, C400–C412, C432–C459, C463–C483, C474–C486, C488–C497, C499–C529, C512–C527, C521–C532, C534–C547, C549–C570, C554–C568, C562–C573, and C575–C584. Residue N125 is glycosylated (N-linked (GlcNAc...) asparagine). The VWFA domain maps to 135–377 (DYPVDIYYLM…QLIVDAYGKI (243 aa)). Mg(2+) is bound by residues S147 and S149. Residues S149, D152, D153, and D184 each contribute to the Ca(2+) site. Positions 203 to 210 (CYDMKTTC) are involved in CX3CL1-, NRG1-, FGF1- and IGF1-binding. The Ca(2+) site is built by N241, D243, P245, E246, and D277. E246 is a Mg(2+) binding site. The interval 293-313 (QPNDGQCHVGSDNHYSASTTM) is CX3CL1-binding. An N-linked (GlcNAc...) asparagine glycan is attached at N346. A Ca(2+)-binding site is contributed by M361. A glycan (N-linked (GlcNAc...) asparagine) is linked at N397. I-EGF domains follow at residues 463–498 (CQAQ…SQCE), 499–548 (CSEE…KYCE), 549–585 (CDDF…YYCN), and 586–625 (CTTR…DTCE). N478 is a glycosylation site (N-linked (GlcNAc...) asparagine). N-linked (GlcNAc...) asparagine glycosylation occurs at N585. 9 cysteine pairs are disulfide-bonded: C586-C609, C593-C607, C601-C612, C614-C624, C627-C630, C634-C681, C640-C661, C643-C657, and C689-C713. N-linked (GlcNAc...) asparagine glycosylation occurs at N680. Residues 719-741 (ILVVLLSVMGAILLIGLAALLIW) traverse the membrane as a helical segment. Residues 742–788 (KLLITIHDRKEFAKFEEERARAKWDTANNPLYKEATSTFTNITYRGT) lie on the Cytoplasmic side of the membrane. Phosphothreonine is present on T767. Position 773 is a phosphotyrosine (Y773). Positions 777 to 783 (TSTFTNI) match the LIR motif. The residue at position 779 (T779) is a Phosphothreonine; by PDPK1 and PKB/AKT1; in vitro. A Phosphotyrosine modification is found at Y785.

Belongs to the integrin beta chain family. As to quaternary structure, heterodimer of an alpha and a beta subunit. Beta-3 (ITGB3) associates with either alpha-IIb (ITGA2B) or alpha-V (ITGAV). Isoform Beta-3C interacts with FLNB. Interacts with COMP. Interacts with PDIA6 following platelet stimulation. Interacts with SYK; upon activation by ITGB3 promotes platelet adhesion. Interacts with MYO10. Interacts with DAB2. Interacts with FERMT2. Interacts with EMP2; regulates the levels of the heterodimer ITGA5:ITGB3 integrin expression on the plasma membrane. Integrin ITGAV:ITGB3 interacts with FBLN5 (via N-terminus). ITGAV:ITGB3 interacts with CCN3. ITGAV:ITGB3 and ITGA2B:ITGB3 interact with SELP (via C-type lectin domain); the interaction mediates cell-cell interaction and adhesion. ITGAV:ITGB3 is found in a ternary complex with CX3CR1 and CX3CL1. ITGAV:ITGB3 is found in a ternary complex with NRG1 and ERBB3. ITGAV:ITGB3 is found in a ternary complex with FGF1 and FGFR1. ITGAV:ITGB3 interacts with FGF2; it is likely that FGF2 can simultaneously bind ITGAV:ITGB3 and FGF receptors. ITGAV:ITGB3 binds to IL1B. ITGAV:ITGB3 is found in a ternary complex with IGF1 and IGF1R. ITGAV:ITGB3 interacts with IGF2. ITGAV:ITGB3 interacts with FBN1. ITGAV:ITGB3 interacts with CD9, CD81 and CD151 (via second extracellular domain). Interacts (via the allosteric site (site 2)) with CXCL12 in a CXCR4-independent manner. Interacts with MXRA8/DICAM; the interaction inhibits ITGAV:ITGB3 heterodimer formation. ITGAV:ITGB3 interacts with PTN. Forms a complex with PTPRZ1 and PTN that stimulates endothelial cell migration through ITGB3 Tyr-773 phosphorylation. ITGAV:ITGB3 interacts with SLC6A4. Interacts with SLC6A4 (via C-terminus); this interaction regulates SLC6A4 trafficking. ITGA2B:ITGB3 interacts with PPIA/CYPA; the interaction is ROS and PPIase activity-dependent and is increased in the presence of thrombin. Interacts with tensin TNS3; TNS3 also interacts with PEAK1, thus acting as an adapter molecule to bridge the association of PEAK1 with ITGB3. Interacts with TM4SF19. In terms of assembly, (Microbial infection) Integrin ITGAV:ITGB3 interacts with herpes virus 8/HHV-8 glycoprotein B. (Microbial infection) Integrin ITGAV:ITGB3 interacts with coxsackievirus A9 capsid proteins. As to quaternary structure, (Microbial infection) Interacts with Hantaan virus glycoprotein G. In terms of assembly, (Microbial infection) Integrin ITGAV:ITGB3 interacts with cytomegalovirus/HHV-5 gH:gL proteins. (Microbial infection) Integrin ITGA5:ITGB3 interacts with human metapneumovirus fusion protein. As to quaternary structure, (Microbial infection) Integrin ITGAV:ITGB3 interacts with human parechovirus 1 capsid proteins. In terms of assembly, (Microbial infection) Integrin ITGAV:ITGB3 interacts with west nile virus envelope protein E. (Microbial infection) Interacts with HIV-1 Tat. ITGAV:ITGB3 interacts with AGRA2. Post-translationally, phosphorylated on tyrosine residues in response to thrombin-induced platelet aggregation. Probably involved in outside-in signaling. A peptide (AA 740-762) is capable of binding GRB2 only when both Tyr-773 and Tyr-785 are phosphorylated. Phosphorylation of Thr-779 inhibits SHC binding. In terms of tissue distribution, isoform beta-3A and isoform beta-3C are widely expressed. Isoform beta-3A is specifically expressed in osteoblast cells; isoform beta-3C is specifically expressed in prostate and testis.

The protein localises to the cell membrane. It localises to the cell projection. The protein resides in the lamellipodium membrane. It is found in the cell junction. Its subcellular location is the focal adhesion. The protein localises to the postsynaptic cell membrane. It localises to the synapse. In terms of biological role, integrin alpha-V/beta-3 (ITGAV:ITGB3) is a receptor for cytotactin, fibronectin, laminin, matrix metalloproteinase-2, osteopontin, osteomodulin, prothrombin, thrombospondin, vitronectin and von Willebrand factor. Integrin alpha-IIb/beta-3 (ITGA2B:ITGB3) is a receptor for fibronectin, fibrinogen, plasminogen, prothrombin, thrombospondin and vitronectin. Integrins alpha-IIb/beta-3 and alpha-V/beta-3 recognize the sequence R-G-D in a wide array of ligands. Integrin alpha-IIb/beta-3 recognizes the sequence H-H-L-G-G-G-A-K-Q-A-G-D-V in fibrinogen gamma chain. Following activation integrin alpha-IIb/beta-3 brings about platelet/platelet interaction through binding of soluble fibrinogen. This step leads to rapid platelet aggregation which physically plugs ruptured endothelial surface. Fibrinogen binding enhances SELP expression in activated platelets. ITGAV:ITGB3 binds to fractalkine (CX3CL1) and acts as its coreceptor in CX3CR1-dependent fractalkine signaling. ITGAV:ITGB3 binds to NRG1 (via EGF domain) and this binding is essential for NRG1-ERBB signaling. ITGAV:ITGB3 binds to FGF1 and this binding is essential for FGF1 signaling. ITGAV:ITGB3 binds to FGF2 and this binding is essential for FGF2 signaling. ITGAV:ITGB3 binds to IGF1 and this binding is essential for IGF1 signaling. ITGAV:ITGB3 binds to IGF2 and this binding is essential for IGF2 signaling. ITGAV:ITGB3 binds to IL1B and this binding is essential for IL1B signaling. ITGAV:ITGB3 binds to PLA2G2A via a site (site 2) which is distinct from the classical ligand-binding site (site 1) and this induces integrin conformational changes and enhanced ligand binding to site 1. ITGAV:ITGB3 acts as a receptor for fibrillin-1 (FBN1) and mediates R-G-D-dependent cell adhesion to FBN1. In brain, plays a role in synaptic transmission and plasticity. Involved in the regulation of the serotonin neurotransmission, is required to localize to specific compartments within the synapse the serotonin receptor SLC6A4 and for an appropriate reuptake of serotonin. Controls excitatory synaptic strength by regulating GRIA2-containing AMPAR endocytosis, which affects AMPAR abundance and composition. ITGAV:ITGB3 act as a receptor for CD40LG. ITGAV:ITGB3 acts as a receptor for IBSP and promotes cell adhesion and migration to IBSP. (Microbial infection) Integrin ITGAV:ITGB3 acts as a receptor for Herpes virus 8/HHV-8. Its function is as follows. (Microbial infection) Integrin ITGAV:ITGB3 acts as a receptor for Coxsackievirus A9. Functionally, (Microbial infection) Acts as a receptor for Hantaan virus. In terms of biological role, (Microbial infection) Integrin ITGAV:ITGB3 acts as a receptor for Cytomegalovirus/HHV-5. (Microbial infection) Integrin ITGA5:ITGB3 acts as a receptor for Human metapneumovirus. Its function is as follows. (Microbial infection) Integrin ITGAV:ITGB3 acts aP05556s a receptor for Human parechovirus 1. Functionally, (Microbial infection) Integrin ITGAV:ITGB3 acts as a receptor for West nile virus. In terms of biological role, (Microbial infection) In case of HIV-1 infection, the interaction with extracellular viral Tat protein seems to enhance angiogenesis in Kaposi's sarcoma lesions. In Homo sapiens (Human), this protein is Integrin beta-3.